The sequence spans 155 residues: Small ribosomal subunit protein uS7cz/uS7cy (155 aa).

The protein belongs to the universal ribosomal protein uS7 family. Part of the 30S ribosomal subunit.

The protein resides in the plastid. Its subcellular location is the chloroplast. Functionally, one of the primary rRNA binding proteins, it binds directly to 16S rRNA where it nucleates assembly of the head domain of the 30S subunit. The sequence is that of Small ribosomal subunit protein uS7cz/uS7cy (rps7-A) from Anthoceros angustus (Hornwort).